Reading from the N-terminus, the 535-residue chain is Isoleucine N-monooxygenase 1 (535 aa).

The Cytoplasmic segment spans residues 1-8 (MGLMPDFL). Residues 9–29 (SLCHEFPWTFLLVVIFSFMIF) form a helical; Signal-anchor for type II membrane protein membrane-spanning segment. Residues 30–535 (KVTKTHLVNK…AAELYRTNEI (506 aa)) lie on the Lumenal side of the membrane. N-linked (GlcNAc...) asparagine glycosylation is found at Asn38, Asn232, and Asn404. Residue Cys470 participates in heme binding.

The protein belongs to the cytochrome P450 family. Heme is required as a cofactor. Exclusively expressed in aerial parts. Highest expression in the apical leaves. Also detected in the second leaf from the top and in the stem. Not expressed in older leaves or roots.

It is found in the microsome membrane. The catalysed reaction is L-isoleucine + 2 reduced [NADPH--hemoprotein reductase] + 2 O2 = (1E,2S)-2-methylbutanal oxime + 2 oxidized [NADPH--hemoprotein reductase] + CO2 + 3 H2O + 2 H(+). It catalyses the reaction L-isoleucine + reduced [NADPH--hemoprotein reductase] + O2 = N-hydroxy-L-isoleucine + oxidized [NADPH--hemoprotein reductase] + H2O + 2 H(+). The enzyme catalyses N-hydroxy-L-isoleucine + reduced [NADPH--hemoprotein reductase] + O2 = N,N-dihydroxy-L-isoleucine + oxidized [NADPH--hemoprotein reductase] + H2O + H(+). It carries out the reaction L-valine + 2 reduced [NADPH--hemoprotein reductase] + 2 O2 = (E)-2-methylpropanal oxime + 2 oxidized [NADPH--hemoprotein reductase] + CO2 + 3 H2O + 2 H(+). The catalysed reaction is L-valine + reduced [NADPH--hemoprotein reductase] + O2 = N-hydroxy-L-valine + oxidized [NADPH--hemoprotein reductase] + H2O + 2 H(+). It catalyses the reaction N-hydroxy-L-valine + reduced [NADPH--hemoprotein reductase] + O2 = N,N-dihydroxy-L-valine + oxidized [NADPH--hemoprotein reductase] + H2O + H(+). Its pathway is secondary metabolite biosynthesis. Functionally, involved in the biosynthesis of the cyanogenic glucosides linamarin and lotaustralin and of the nitirle glucosides rhodiocyanoside A and D. Can use L-isoleucine &gt; L-valine as substrate, but not L-leucine, L-phenylalanine or L-tyrosine. Catalyzes multi-step reactions starting with two successive N-hydroxylations using L-isoleucine and, to a lower extent, L-valine as substrates leading to the formation of N,N-dihydroxy-L-valine and N,N-dihydroxy-L-isoleucine, respectively; following spontaneous reactions lead to the production of (E)-2-methylpropanal oxime and (1E,2S)-2-methylbutanal oxime, respectively. In Lotus japonicus (Lotus corniculatus var. japonicus), this protein is Isoleucine N-monooxygenase 1.